A 929-amino-acid chain; its full sequence is Leucine--tRNA ligase (929 aa).

The 'HIGH' region signature appears at 42 to 52 (PYPSGNLHMGH). A 'KMSKS' region motif is present at residues 614 to 618 (KMSKS). K617 lines the ATP pocket.

Belongs to the class-I aminoacyl-tRNA synthetase family.

It is found in the cytoplasm. The enzyme catalyses tRNA(Leu) + L-leucine + ATP = L-leucyl-tRNA(Leu) + AMP + diphosphate. The sequence is that of Leucine--tRNA ligase from Trichodesmium erythraeum (strain IMS101).